Here is a 430-residue protein sequence, read N- to C-terminus: UPF0597 protein DSY1109 (430 aa).

Belongs to the UPF0597 family.

The protein is UPF0597 protein DSY1109 of Desulfitobacterium hafniense (strain Y51).